Consider the following 286-residue polypeptide: Urease accessory protein UreD (286 aa).

Belongs to the UreD family. In terms of assembly, ureD, UreF and UreG form a complex that acts as a GTP-hydrolysis-dependent molecular chaperone, activating the urease apoprotein by helping to assemble the nickel containing metallocenter of UreC. The UreE protein probably delivers the nickel.

The protein resides in the cytoplasm. Required for maturation of urease via the functional incorporation of the urease nickel metallocenter. This is Urease accessory protein UreD from Rhodopseudomonas palustris (strain BisA53).